Here is a 137-residue protein sequence, read N- to C-terminus: Large ribosomal subunit protein uL16 (137 aa).

Belongs to the universal ribosomal protein uL16 family. As to quaternary structure, part of the 50S ribosomal subunit.

Its function is as follows. Binds 23S rRNA and is also seen to make contacts with the A and possibly P site tRNAs. In Lactococcus lactis subsp. cremoris (strain SK11), this protein is Large ribosomal subunit protein uL16.